The chain runs to 309 residues: Polyprenal reductase (309 aa).

Topologically, residues 1-3 (MFH) are cytoplasmic. A helical transmembrane segment spans residues 4-24 (ILSIVNIIWLLLALCFGAAFC). At 25 to 67 (LNKFSVKLPNRVEHVFQDFIRYGKTKENIKRASWQLVFDLSKR) the chain is on the lumenal side. The chain crosses the membrane as a helical span at residues 68–88 (YFYHFYVVSVMWNGLLLLFSI). Over 89–114 (RSVVMSEAFPDWIIDVLGSLTGRSRG) the chain is Cytoplasmic. The chain crosses the membrane as a helical span at residues 115-135 (AWNEIHLSTLLLQVLLWVHTL). Residues 136 to 150 (RRLLECLFVSVFSDG) lie on the Lumenal side of the membrane. The chain crosses the membrane as a helical span at residues 151–171 (VINVVQYAFGLSYYIILGLTV). Topologically, residues 172–185 (LCTNDSLPQSESVS) are cytoplasmic. A helical transmembrane segment spans residues 186-206 (FFNQLTWYHVVGTLLFFWASF). The Lumenal segment spans residues 207 to 255 (LQHQSLSLLAKMRTDSSGKVETLAHKMPCGGWFELVSCPHYLAELLIYA). The helical transmembrane segment at 256–276 (AMCVCCGCASLTWWMVVLYVL) threads the bilayer. Residues 277–309 (CNQALAAQLCHEYYRSKFKTYPHHRKAFIPFVL) are Cytoplasmic-facing.

Belongs to the steroid 5-alpha reductase family. Polyprenal reductase subfamily.

Its subcellular location is the endoplasmic reticulum membrane. It carries out the reaction a di-trans,poly-cis-dolichal + NADP(+) = a di-trans,poly-cis-polyprenal + NADPH + H(+). The catalysed reaction is a 3-oxo-5alpha-steroid + NADP(+) = a 3-oxo-Delta(4)-steroid + NADPH + H(+). It catalyses the reaction androst-4-ene-3,17-dione + NADPH + H(+) = 5alpha-androstan-3,17-dione + NADP(+). The enzyme catalyses 17beta-hydroxy-5alpha-androstan-3-one + NADP(+) = testosterone + NADPH + H(+). The protein operates within protein modification; protein glycosylation. Its function is as follows. Plays a key role in early steps of protein N-linked glycosylation by being involved in the conversion of polyprenol into dolichol. Acts as a polyprenal reductase that mediates the reduction of polyprenal into dolichal in a NADP-dependent mechanism. Dolichols are required for the synthesis of dolichol-linked monosaccharides and the oligosaccharide precursor used for N-glycosylation. Also able to convert testosterone (T) into 5-alpha-dihydrotestosterone (DHT). The polypeptide is Polyprenal reductase (srd5a3) (Danio rerio (Zebrafish)).